Reading from the N-terminus, the 949-residue chain is Leucine--tRNA ligase (949 aa).

Residues 68-79 (PYPSGEGLHVGH) carry the 'HIGH' region motif. A disordered region spans residues 540-562 (VPDYSPVSFDPDDAGSEPSPPLG). Residues 722–726 (KIGKS) carry the 'KMSKS' region motif. Lys-725 is a binding site for ATP.

This sequence belongs to the class-I aminoacyl-tRNA synthetase family.

It localises to the cytoplasm. The catalysed reaction is tRNA(Leu) + L-leucine + ATP = L-leucyl-tRNA(Leu) + AMP + diphosphate. This is Leucine--tRNA ligase from Mycolicibacterium gilvum (strain PYR-GCK) (Mycobacterium gilvum (strain PYR-GCK)).